We begin with the raw amino-acid sequence, 130 residues long: Small ribosomal subunit protein uS9 (130 aa).

It belongs to the universal ribosomal protein uS9 family.

This Delftia acidovorans (strain DSM 14801 / SPH-1) protein is Small ribosomal subunit protein uS9.